Consider the following 394-residue polypeptide: GTPase Obg (394 aa).

In terms of domain architecture, Obg spans S5–L163. The disordered stretch occupies residues H26–R45. Residues A164 to S330 enclose the OBG-type G domain. Residues G170–S177, F195–E199, D217–G220, T284–D287, and S311–V313 each bind GTP. Residues S177 and T197 each coordinate Mg(2+).

The protein belongs to the TRAFAC class OBG-HflX-like GTPase superfamily. OBG GTPase family. Monomer. Mg(2+) is required as a cofactor.

It is found in the cytoplasm. Functionally, an essential GTPase which binds GTP, GDP and possibly (p)ppGpp with moderate affinity, with high nucleotide exchange rates and a fairly low GTP hydrolysis rate. Plays a role in control of the cell cycle, stress response, ribosome biogenesis and in those bacteria that undergo differentiation, in morphogenesis control. This chain is GTPase Obg, found in Porphyromonas gingivalis (strain ATCC 33277 / DSM 20709 / CIP 103683 / JCM 12257 / NCTC 11834 / 2561).